A 451-amino-acid polypeptide reads, in one-letter code: Chromosomal replication initiator protein DnaA (451 aa).

Residues 1 to 82 form a domain I, interacts with DnaA modulators region; the sequence is MENSLWKQCL…RLELQIGSSA (82 aa). A domain II region spans residues 82–114; sequence AVVAPPRRRQVSVTTPSPSAAADQTPATRSAAS. A disordered region spans residues 85–112; it reads APPRRRQVSVTTPSPSAAADQTPATRSA. A domain III, AAA+ region region spans residues 115 to 331; that stretch reads NLNSNFTFDT…GALRRVVANA (217 aa). 4 residues coordinate ATP: Gly-159, Gly-161, Lys-162, and Thr-163. Positions 332 to 451 are domain IV, binds dsDNA; it reads QFTGQEITVE…YSNLLRTLST (120 aa).

It belongs to the DnaA family. Oligomerizes as a right-handed, spiral filament on DNA at oriC.

It is found in the cytoplasm. In terms of biological role, plays an essential role in the initiation and regulation of chromosomal replication. ATP-DnaA binds to the origin of replication (oriC) to initiate formation of the DNA replication initiation complex once per cell cycle. Binds the DnaA box (a 9 base pair repeat at the origin) and separates the double-stranded (ds)DNA. Forms a right-handed helical filament on oriC DNA; dsDNA binds to the exterior of the filament while single-stranded (ss)DNA is stabiized in the filament's interior. The ATP-DnaA-oriC complex binds and stabilizes one strand of the AT-rich DNA unwinding element (DUE), permitting loading of DNA polymerase. After initiation quickly degrades to an ADP-DnaA complex that is not apt for DNA replication. Binds acidic phospholipids. This Alkalilimnicola ehrlichii (strain ATCC BAA-1101 / DSM 17681 / MLHE-1) protein is Chromosomal replication initiator protein DnaA.